The following is a 273-amino-acid chain: Anthocyanin regulatory C1 protein (273 aa).

2 HTH myb-type domains span residues 9-65 (KEGV…RPNI) and 66-116 (RRGN…GRRA). 2 DNA-binding regions (H-T-H motif) span residues 37–61 (WREVPQKAGLRRCGKSCRLRWLNYL) and 89–112 (WSLIAGRLPGRTDNEIKNYWNSTL). Disordered stretches follow at residues 137–164 (ATPAATSGACETGQNSAAHRADPDSAGT) and 196–220 (AGETATPMAGGGGGGGGEAGSSDDC). The segment covering 204–214 (AGGGGGGGGEA) has biased composition (gly residues).

It localises to the nucleus. Its function is as follows. Controls the expression of genes involved in anthocyanin biosynthesis. Regulates the expression of at least 3 structural genes: chalcone synthase, dihydroflavonol reductase and flavonol O(3) glucosyltransferase. C1 acts as a trans-acting factor. This chain is Anthocyanin regulatory C1 protein (C1), found in Zea mays (Maize).